The chain runs to 258 residues: ATP synthase subunit a (258 aa).

Transmembrane regions (helical) follow at residues 30-50, 85-105, 122-142, 151-171, 198-218, and 230-250; these read SSYF…VAMS, FFPF…LGMF, LIVT…YGVF, LFVP…IEII, FAGF…LAGI, and LEFL…CIYL.

It belongs to the ATPase A chain family. In terms of assembly, F-type ATPases have 2 components, CF(1) - the catalytic core - and CF(0) - the membrane proton channel. CF(1) has five subunits: alpha(3), beta(3), gamma(1), delta(1), epsilon(1). CF(0) has three main subunits: a(1), b(2) and c(9-12). The alpha and beta chains form an alternating ring which encloses part of the gamma chain. CF(1) is attached to CF(0) by a central stalk formed by the gamma and epsilon chains, while a peripheral stalk is formed by the delta and b chains.

Its subcellular location is the cell inner membrane. In terms of biological role, key component of the proton channel; it plays a direct role in the translocation of protons across the membrane. The sequence is that of ATP synthase subunit a from Maricaulis maris (strain MCS10) (Caulobacter maris).